Reading from the N-terminus, the 581-residue chain is Proline--tRNA ligase (581 aa).

Belongs to the class-II aminoacyl-tRNA synthetase family. ProS type 1 subfamily. In terms of assembly, homodimer.

It is found in the cytoplasm. It carries out the reaction tRNA(Pro) + L-proline + ATP = L-prolyl-tRNA(Pro) + AMP + diphosphate. Catalyzes the attachment of proline to tRNA(Pro) in a two-step reaction: proline is first activated by ATP to form Pro-AMP and then transferred to the acceptor end of tRNA(Pro). As ProRS can inadvertently accommodate and process non-cognate amino acids such as alanine and cysteine, to avoid such errors it has two additional distinct editing activities against alanine. One activity is designated as 'pretransfer' editing and involves the tRNA(Pro)-independent hydrolysis of activated Ala-AMP. The other activity is designated 'posttransfer' editing and involves deacylation of mischarged Ala-tRNA(Pro). The misacylated Cys-tRNA(Pro) is not edited by ProRS. In Paracidovorax citrulli (strain AAC00-1) (Acidovorax citrulli), this protein is Proline--tRNA ligase.